Here is a 131-residue protein sequence, read N- to C-terminus: Histone H2B (131 aa).

A compositionally biased stretch (basic and acidic residues) spans 1–19; it reads MAPKAEKKPASKAPAEKKP. Residues 1 to 38 form a disordered region; it reads MAPKAEKKPASKAPAEKKPAAKKTASSTDGGKKRTKAR. N6-acetyllysine; alternate occurs at positions 7 and 8. Glycyl lysine isopeptide (Lys-Gly) (interchain with G-Cter in SUMO); alternate cross-links involve residues Lys-7 and Lys-8. Position 11 is a phosphoserine (Ser-11). Lys-12 carries the N6-acetyllysine modification. Residue Lys-17 is modified to N6-acetyllysine; alternate. Lys-17 is covalently cross-linked (Glycyl lysine isopeptide (Lys-Gly) (interchain with G-Cter in SUMO); alternate). Lys-18 participates in a covalent cross-link: Glycyl lysine isopeptide (Lys-Gly) (interchain with G-Cter in SUMO). Lys-125 participates in a covalent cross-link: Glycyl lysine isopeptide (Lys-Gly) (interchain with G-Cter in ubiquitin).

The protein belongs to the histone H2B family. In terms of assembly, the nucleosome is a histone octamer containing two molecules each of H2A, H2B, H3 and H4 assembled in one H3-H4 heterotetramer and two H2A-H2B heterodimers. The octamer wraps approximately 147 bp of DNA. Post-translationally, monoubiquitinated by the UBC2-BRE1 complex to form H2BK123ub1. H2BK123ub1 gives a specific tag for epigenetic transcriptional activation and is also prerequisite for H3K4me and H3K79me formation. H2BK123ub1 also modulates the formation of double-strand breaks during meiosis and is a prerequisite for DNA-damage checkpoint activation. In terms of processing, phosphorylated by STE20 to form H2BS10ph during progression through meiotic prophase. May be correlated with chromosome condensation. Acetylated by GCN5 to form H2BK11ac and H2BK16ac. H2BK16ac can also be formed by ESA1. Acetylation of N-terminal lysines and particularly formation of H2BK11acK16ac has a positive effect on transcription. Post-translationally, sumoylation to form H2BK6su or H2BK7su, and probably also H2BK16su or H2BK17su, occurs preferentially near the telomeres and represses gene transcription.

Its subcellular location is the nucleus. The protein resides in the chromosome. In terms of biological role, core component of nucleosome. Nucleosomes wrap and compact DNA into chromatin, limiting DNA accessibility to the cellular machineries which require DNA as a template. Histones thereby play a central role in transcription regulation, DNA repair, DNA replication and chromosomal stability. DNA accessibility is regulated via a complex set of post-translational modifications of histones, also called histone code, and nucleosome remodeling. The protein is Histone H2B (HTB1) of Lodderomyces elongisporus (strain ATCC 11503 / CBS 2605 / JCM 1781 / NBRC 1676 / NRRL YB-4239) (Yeast).